A 447-amino-acid polypeptide reads, in one-letter code: Exodeoxyribonuclease 7 large subunit (447 aa).

It belongs to the XseA family. Heterooligomer composed of large and small subunits.

Its subcellular location is the cytoplasm. The catalysed reaction is Exonucleolytic cleavage in either 5'- to 3'- or 3'- to 5'-direction to yield nucleoside 5'-phosphates.. Bidirectionally degrades single-stranded DNA into large acid-insoluble oligonucleotides, which are then degraded further into small acid-soluble oligonucleotides. The polypeptide is Exodeoxyribonuclease 7 large subunit (Pediococcus pentosaceus (strain ATCC 25745 / CCUG 21536 / LMG 10740 / 183-1w)).